The following is a 123-amino-acid chain: Large ribosomal subunit protein bL12 (123 aa).

This sequence belongs to the bacterial ribosomal protein bL12 family. Homodimer. Part of the ribosomal stalk of the 50S ribosomal subunit. Forms a multimeric L10(L12)X complex, where L10 forms an elongated spine to which 2 to 4 L12 dimers bind in a sequential fashion. Binds GTP-bound translation factors.

Forms part of the ribosomal stalk which helps the ribosome interact with GTP-bound translation factors. Is thus essential for accurate translation. This is Large ribosomal subunit protein bL12 from Desulfotalea psychrophila (strain LSv54 / DSM 12343).